Consider the following 277-residue polypeptide: Large ribosomal subunit protein uL2 (277 aa).

Positions 222–277 (GSVMNPNDHPHGGGEGKAPVGRKAPSTPWGKPALGLKTRNKKAKSDKLIVRRRNEK) are disordered. Residues 264-277 (AKSDKLIVRRRNEK) show a composition bias toward basic and acidic residues.

The protein belongs to the universal ribosomal protein uL2 family. Part of the 50S ribosomal subunit. Forms a bridge to the 30S subunit in the 70S ribosome.

Its function is as follows. One of the primary rRNA binding proteins. Required for association of the 30S and 50S subunits to form the 70S ribosome, for tRNA binding and peptide bond formation. It has been suggested to have peptidyltransferase activity; this is somewhat controversial. Makes several contacts with the 16S rRNA in the 70S ribosome. In Streptococcus thermophilus (strain CNRZ 1066), this protein is Large ribosomal subunit protein uL2.